The chain runs to 118 residues: Holo-[acyl-carrier-protein] synthase (118 aa).

Mg(2+) contacts are provided by Asp8 and Glu58.

This sequence belongs to the P-Pant transferase superfamily. AcpS family. Mg(2+) serves as cofactor.

Its subcellular location is the cytoplasm. The catalysed reaction is apo-[ACP] + CoA = holo-[ACP] + adenosine 3',5'-bisphosphate + H(+). In terms of biological role, transfers the 4'-phosphopantetheine moiety from coenzyme A to a Ser of acyl-carrier-protein. The sequence is that of Holo-[acyl-carrier-protein] synthase from Listeria monocytogenes serotype 4b (strain CLIP80459).